A 379-amino-acid chain; its full sequence is Putative cysteine desulfurase IscS 1 (379 aa).

Pyridoxal 5'-phosphate is bound by residues 71–72, asparagine 151, glutamine 179, and 199–201; these read GT and SGH. Lysine 202 is modified (N6-(pyridoxal phosphate)lysine). Threonine 237 serves as a coordination point for pyridoxal 5'-phosphate. Cysteine 325 (cysteine persulfide intermediate) is an active-site residue. Cysteine 325 contributes to the [2Fe-2S] cluster binding site.

Belongs to the class-V pyridoxal-phosphate-dependent aminotransferase family. NifS/IscS subfamily. It depends on pyridoxal 5'-phosphate as a cofactor.

It catalyses the reaction (sulfur carrier)-H + L-cysteine = (sulfur carrier)-SH + L-alanine. Functionally, catalyzes the removal of elemental sulfur from cysteine to produce alanine. The protein is Putative cysteine desulfurase IscS 1 (iscS1) of Bacillus subtilis (strain 168).